Reading from the N-terminus, the 37-residue chain is Large ribosomal subunit protein bL36A (37 aa).

The protein belongs to the bacterial ribosomal protein bL36 family.

This Actinobacillus pleuropneumoniae serotype 3 (strain JL03) protein is Large ribosomal subunit protein bL36A.